A 279-amino-acid polypeptide reads, in one-letter code: Phosphatidylglycerol--prolipoprotein diacylglyceryl transferase (279 aa).

The next 3 helical transmembrane spans lie at 22–42, 52–72, and 89–109; these read WYGI…QAAL, LIDI…IYFV, and IWHG…SGII. Arg-137 contacts a 1,2-diacyl-sn-glycero-3-phospho-(1'-sn-glycerol). Helical transmembrane passes span 203–223 and 235–255; these read LGET…FVEA and IRVA…FVIY.

It belongs to the Lgt family.

It is found in the cell membrane. It carries out the reaction L-cysteinyl-[prolipoprotein] + a 1,2-diacyl-sn-glycero-3-phospho-(1'-sn-glycerol) = an S-1,2-diacyl-sn-glyceryl-L-cysteinyl-[prolipoprotein] + sn-glycerol 1-phosphate + H(+). It functions in the pathway protein modification; lipoprotein biosynthesis (diacylglyceryl transfer). Catalyzes the transfer of the diacylglyceryl group from phosphatidylglycerol to the sulfhydryl group of the N-terminal cysteine of a prolipoprotein, the first step in the formation of mature lipoproteins. This is Phosphatidylglycerol--prolipoprotein diacylglyceryl transferase from Staphylococcus epidermidis (strain ATCC 12228 / FDA PCI 1200).